The following is a 108-amino-acid chain: T cell receptor alpha variable 1-1 (108 aa).

The signal sequence occupies residues 1–18 (MWGAFLLYVSMKMGGTAG). The Ig-like domain maps to 19 to 108 (QSLEQPSEVT…DSASYFCAVR (90 aa)). The N-linked (GlcNAc...) asparagine glycan is linked to asparagine 38. Cysteine 39 and cysteine 105 are joined by a disulfide.

Alpha-beta TR is a heterodimer composed of an alpha and beta chain; disulfide-linked. The alpha-beta TR is associated with the transmembrane signaling CD3 coreceptor proteins to form the TR-CD3 (TcR or TCR). The assembly of alpha-beta TR heterodimers with CD3 occurs in the endoplasmic reticulum where a single alpha-beta TR heterodimer associates with one CD3D-CD3E heterodimer, one CD3G-CD3E heterodimer and one CD247 homodimer forming a stable octameric structure. CD3D-CD3E and CD3G-CD3E heterodimers preferentially associate with TR alpha and TR beta chains, respectively. The association of the CD247 homodimer is the last step of TcR assembly in the endoplasmic reticulum and is required for transport to the cell surface.

It is found in the cell membrane. Functionally, v region of the variable domain of T cell receptor (TR) alpha chain that participates in the antigen recognition. Alpha-beta T cell receptors are antigen specific receptors which are essential to the immune response and are present on the cell surface of T lymphocytes. Recognize peptide-major histocompatibility (MH) (pMH) complexes that are displayed by antigen presenting cells (APC), a prerequisite for efficient T cell adaptive immunity against pathogens. Binding of alpha-beta TR to pMH complex initiates TR-CD3 clustering on the cell surface and intracellular activation of LCK that phosphorylates the ITAM motifs of CD3G, CD3D, CD3E and CD247 enabling the recruitment of ZAP70. In turn ZAP70 phosphorylates LAT, which recruits numerous signaling molecules to form the LAT signalosome. The LAT signalosome propagates signal branching to three major signaling pathways, the calcium, the mitogen-activated protein kinase (MAPK) kinase and the nuclear factor NF-kappa-B (NF-kB) pathways, leading to the mobilization of transcription factors that are critical for gene expression and essential for T cell growth and differentiation. The T cell repertoire is generated in the thymus, by V-(D)-J rearrangement. This repertoire is then shaped by intrathymic selection events to generate a peripheral T cell pool of self-MH restricted, non-autoaggressive T cells. Post-thymic interaction of alpha-beta TR with the pMH complexes shapes TR structural and functional avidity. The protein is T cell receptor alpha variable 1-1 of Homo sapiens (Human).